Consider the following 289-residue polypeptide: RING-H2 finger protein ATL30 (289 aa).

A helical membrane pass occupies residues 26-46 (VIILTVILLVVFFIGFFAIYF). The RING-type; atypical zinc finger occupies 114–157 (CAICLLEFEEEHILLRLLTTCYHVFHQECIDQWLESNKTCPVCR). A disordered region spans residues 181–206 (HENRDQEQTSTSNEVMLSRQSSGNNE). Residues 188 to 204 (QTSTSNEVMLSRQSSGN) are compositionally biased toward polar residues.

The protein belongs to the RING-type zinc finger family. ATL subfamily.

Its subcellular location is the membrane. The enzyme catalyses S-ubiquitinyl-[E2 ubiquitin-conjugating enzyme]-L-cysteine + [acceptor protein]-L-lysine = [E2 ubiquitin-conjugating enzyme]-L-cysteine + N(6)-ubiquitinyl-[acceptor protein]-L-lysine.. It participates in protein modification; protein ubiquitination. The sequence is that of RING-H2 finger protein ATL30 (ATL30) from Arabidopsis thaliana (Mouse-ear cress).